The primary structure comprises 103 residues: Large ribosomal subunit protein uL23 (103 aa).

Belongs to the universal ribosomal protein uL23 family. In terms of assembly, part of the 50S ribosomal subunit. Contacts protein L29, and trigger factor when it is bound to the ribosome.

In terms of biological role, one of the early assembly proteins it binds 23S rRNA. One of the proteins that surrounds the polypeptide exit tunnel on the outside of the ribosome. Forms the main docking site for trigger factor binding to the ribosome. This is Large ribosomal subunit protein uL23 from Chlorobium chlorochromatii (strain CaD3).